We begin with the raw amino-acid sequence, 1108 residues long: Alpha-mannosidase 2 (1108 aa).

Over 1 to 9 (MLRIRRRFA) the chain is Cytoplasmic. Residues 10–30 (LVICSGCLLVFLSLYIILNFA) form a helical; Signal-anchor for type II membrane protein membrane-spanning segment. Residues 31-1108 (APAATQIKPN…TAAYVSSHSS (1078 aa)) are Lumenal-facing. The interval 70 to 92 (AETSNRDDPIRPPLKVARSPRPG) is disordered. Residues His153, Asp155, Asp267, and His534 each coordinate Zn(2+). Asp267 (nucleophile) is an active-site residue.

Belongs to the glycosyl hydrolase 38 family. As to quaternary structure, homodimer; disulfide-linked. Requires Zn(2+) as cofactor.

It is found in the golgi apparatus membrane. It catalyses the reaction N(4)-{beta-D-GlcNAc-(1-&gt;2)-alpha-D-Man-(1-&gt;3)-[alpha-D-Man-(1-&gt;3)-[alpha-D-Man-(1-&gt;6)]-alpha-D-Man-(1-&gt;6)]-beta-D-Man-(1-&gt;4)-beta-D-GlcNAc-(1-&gt;4)-beta-D-GlcNAc}-L-asparaginyl-[protein] + 2 H2O = 2 alpha-D-mannopyranose + an N(4)-{beta-D-GlcNAc-(1-&gt;2)-alpha-D-Man-(1-&gt;3)-[alpha-D-Man-(1-&gt;6)]-beta-D-Man-(1-&gt;4)-beta-D-GlcNAc-(1-&gt;4)-beta-D-GlcNAc}-L-asparaginyl-[protein]. It functions in the pathway protein modification; protein glycosylation. Catalyzes the first committed step in the biosynthesis of complex N-glycans. It controls conversion of high mannose to complex N-glycans; the final hydrolytic step in the N-glycan maturation pathway. The protein is Alpha-mannosidase 2 of Drosophila melanogaster (Fruit fly).